Here is a 200-residue protein sequence, read N- to C-terminus: TATA-box-binding protein (200 aa).

2 consecutive repeat copies span residues 25–101 (LQNI…ARII) and 115–192 (IQNI…YPVL).

The protein belongs to the TBP family. As to quaternary structure, belongs to the TFIID complex together with the TBP-associated factors (TAFs). Binds DNA as monomer.

It localises to the nucleus. Functionally, general transcription factor that functions at the core of the DNA-binding multiprotein factor TFIID. Binding of TFIID to the TATA box is the initial transcriptional step of the pre-initiation complex (PIC), playing a role in the activation of eukaryotic genes transcribed by RNA polymerase II. This Nicotiana tabacum (Common tobacco) protein is TATA-box-binding protein.